The primary structure comprises 238 residues: MAADGQCSLPASWRPVTLTHVEYPAGDLSGHLLAYLSLSPIFVVVGFLTLIIFKRELHTISFLGGLALNQGVNWLIKHVIQEPRPCGGPHTAVGTKYGMPSSHSQFMWFFSVYSFLFLYLRMHQTNNARFLDLLWRHVLSLGLLTAAFLVSYSRVYLLYHTWSQVFYGGVAGSLMAVAWFIITQEILTPLFPRIAAWPISEFFLIRDTSLIPNVLWFEYTVTRAEARNRQRKLGTKLQ.

The next 4 membrane-spanning stretches (helical) occupy residues 33 to 53 (LAYL…LIIF), 100 to 120 (PSSH…FLYL), 130 to 150 (FLDL…AFLV), and 162 to 182 (WSQV…WFII).

Belongs to the dolichyldiphosphatase family. Widely expressed with highest levels in brain, kidney, lung and intestine.

The protein resides in the endoplasmic reticulum membrane. It carries out the reaction a di-trans,poly-cis-dolichyl diphosphate + H2O = a di-trans,poly-cis-dolichyl phosphate + phosphate + H(+). Its pathway is protein modification; protein glycosylation. Required for efficient N-glycosylation. Necessary for maintaining optimal levels of dolichol-linked oligosaccharides. Hydrolyzes dolichyl pyrophosphate at a very high rate and dolichyl monophosphate at a much lower rate. Does not act on phosphatidate. This is Dolichyldiphosphatase 1 (Dolpp1) from Mus musculus (Mouse).